The following is a 433-amino-acid chain: Bifunctional urease accessory protein UreEF (433 aa).

Positions 1–200 (MKIANTFIKR…VMATAASTAS (200 aa)) are urease accessory protein UreE. Positions 200–433 (SMTPSLDAGQ…ETQFSRLFRS (234 aa)) are urease accessory protein UreF.

In the N-terminal section; belongs to the UreE family. It in the C-terminal section; belongs to the UreF family. As to quaternary structure, ureD, UreF and UreG form a complex that acts as a GTP-hydrolysis-dependent molecular chaperone, activating the urease apoprotein by helping to assemble the nickel containing metallocenter of UreC. The UreE protein probably delivers the nickel.

The protein localises to the cytoplasm. In terms of biological role, involved in urease metallocenter assembly. Binds nickel. Probably functions as a nickel donor during metallocenter assembly. Required for maturation of urease via the functional incorporation of the urease nickel metallocenter. The chain is Bifunctional urease accessory protein UreEF (ureEF) from Bordetella bronchiseptica (Alcaligenes bronchisepticus).